The primary structure comprises 375 residues: Chaperone protein DnaJ (375 aa).

Residues 5-69 form the J domain; that stretch reads DYYEILGVSK…QKRAAYDQYG (65 aa). A CR-type zinc finger spans residues 130–208; it reads GVTKEIRIPT…CHGHGRVEKA (79 aa). Cys143, Cys146, Cys160, Cys163, Cys182, Cys185, Cys196, and Cys199 together coordinate Zn(2+). CXXCXGXG motif repeat units lie at residues 143 to 150, 160 to 167, 182 to 189, and 196 to 203; these read CGVCHGSG, CPTCHGQG, CPHCHGRG, and CNSCHGHG.

It belongs to the DnaJ family. As to quaternary structure, homodimer. Zn(2+) is required as a cofactor.

The protein resides in the cytoplasm. Functionally, participates actively in the response to hyperosmotic and heat shock by preventing the aggregation of stress-denatured proteins and by disaggregating proteins, also in an autonomous, DnaK-independent fashion. Unfolded proteins bind initially to DnaJ; upon interaction with the DnaJ-bound protein, DnaK hydrolyzes its bound ATP, resulting in the formation of a stable complex. GrpE releases ADP from DnaK; ATP binding to DnaK triggers the release of the substrate protein, thus completing the reaction cycle. Several rounds of ATP-dependent interactions between DnaJ, DnaK and GrpE are required for fully efficient folding. Also involved, together with DnaK and GrpE, in the DNA replication of plasmids through activation of initiation proteins. The sequence is that of Chaperone protein DnaJ from Serratia proteamaculans (strain 568).